Here is a 390-residue protein sequence, read N- to C-terminus: DNA polymerase IV (390 aa).

One can recognise a UmuC domain in the interval 6-187 (VMHVDLDAFF…LDISIMPGIG (182 aa)). Residues Asp10 and Asp105 each contribute to the Mg(2+) site. Glu106 is an active-site residue.

It belongs to the DNA polymerase type-Y family. Monomer. Mg(2+) serves as cofactor.

The protein localises to the cytoplasm. The catalysed reaction is DNA(n) + a 2'-deoxyribonucleoside 5'-triphosphate = DNA(n+1) + diphosphate. Its function is as follows. Poorly processive, error-prone DNA polymerase involved in untargeted mutagenesis. Copies undamaged DNA at stalled replication forks, which arise in vivo from mismatched or misaligned primer ends. These misaligned primers can be extended by PolIV. Exhibits no 3'-5' exonuclease (proofreading) activity. May be involved in translesional synthesis, in conjunction with the beta clamp from PolIII. The protein is DNA polymerase IV of Dehalococcoides mccartyi (strain ATCC BAA-2266 / KCTC 15142 / 195) (Dehalococcoides ethenogenes (strain 195)).